We begin with the raw amino-acid sequence, 276 residues long: Large ribosomal subunit protein uL2 (276 aa).

Residues 219–276 (TVRGSAMNPNDHPHGGGEGRTSIGRPAPVTPWGKPALGYKTRDSKKASNKMIVSRRKK) are disordered.

It belongs to the universal ribosomal protein uL2 family. In terms of assembly, part of the 50S ribosomal subunit. Forms a bridge to the 30S subunit in the 70S ribosome.

In terms of biological role, one of the primary rRNA binding proteins. Required for association of the 30S and 50S subunits to form the 70S ribosome, for tRNA binding and peptide bond formation. It has been suggested to have peptidyltransferase activity; this is somewhat controversial. Makes several contacts with the 16S rRNA in the 70S ribosome. This Alkaliphilus oremlandii (strain OhILAs) (Clostridium oremlandii (strain OhILAs)) protein is Large ribosomal subunit protein uL2.